The chain runs to 260 residues: Ribosomal protein L11 methyltransferase (260 aa).

S-adenosyl-L-methionine is bound by residues Thr-119, Gly-140, Asp-162, and Asn-203.

This sequence belongs to the methyltransferase superfamily. PrmA family.

The protein resides in the cytoplasm. The enzyme catalyses L-lysyl-[protein] + 3 S-adenosyl-L-methionine = N(6),N(6),N(6)-trimethyl-L-lysyl-[protein] + 3 S-adenosyl-L-homocysteine + 3 H(+). Its function is as follows. Methylates ribosomal protein L11. This chain is Ribosomal protein L11 methyltransferase, found in Thermosipho africanus (strain TCF52B).